Consider the following 71-residue polypeptide: Omega-conotoxin SO-3 (71 aa).

A signal peptide spans 1–22 (MKLTCMVIVAVLLLTACQLITA). The propeptide occupies 23-45 (DDSRGTQKHRTLRSKTKLSMSTR). 3 disulfides stabilise this stretch: Cys-46–Cys-61, Cys-53–Cys-65, and Cys-60–Cys-70. Position 70 is a cysteine amide (Cys-70).

This sequence belongs to the conotoxin O1 superfamily. Expressed by the venom duct.

The protein localises to the secreted. In terms of biological role, omega-conotoxins act at presynaptic membranes, they bind and block voltage-gated calcium channels (Cav). This peptide selectively targets Cav2.2/CACNA1B (IC(50)=160 nM) voltage-gated calcium channels. When tested in mammals, this toxin displays an analgesic potency similar to MVIIA in a range of acute and chronic pain models in rodents, but has less adverse effects (tremor, diminution of spontaneous locomotor activity and bad coordinated locomotion) compared with identical dosages of MVIIA injected intrathecally. The polypeptide is Omega-conotoxin SO-3 (Conus striatus (Striated cone)).